Reading from the N-terminus, the 239-residue chain is Putative antitoxin VapB45 (239 aa).

Functionally, possibly the antitoxin component of a type II toxin-antitoxin (TA) system. Its cognate toxin is VapC45. The protein is Putative antitoxin VapB45 of Mycobacterium tuberculosis (strain ATCC 25618 / H37Rv).